Reading from the N-terminus, the 391-residue chain is Cdc42 effector protein 1 (391 aa).

A phosphoserine mark is found at Ser19 and Ser27. Thr34 carries the post-translational modification Phosphothreonine. The CRIB domain occupies 38–52 (ISHPLGDFRHTMHVG). Residue Ser39 is modified to Phosphoserine. The residue at position 53 (Arg53) is an Omega-N-methylarginine. Phosphoserine occurs at positions 65, 73, 77, 101, 113, 121, and 139. The interval 163 to 189 (ISRLPRSEKPHDRDRDGSFPSEPGLRR) is disordered. Over residues 167 to 179 (PRSEKPHDRDRDG) the composition is skewed to basic and acidic residues. 4 positions are modified to phosphoserine: Ser180, Ser190, Ser192, and Ser195. 8 repeat units span residues 220-226 (PAAETPA), 227-233 (PAANPPA), 234-240 (PTANPTG), 241-247 (PAANPPA), 248-254 (TTANPPA), 255-261 (PAANPSA), 262-268 (PAATPTG), and 269-275 (PAANPPA). The tract at residues 220-275 (PAAETPAPAANPPAPTANPTGPAANPPATTANPPAPAANPSAPAATPTGPAANPPA) is 8 X 7 AA tandem repeats of [PT]-[AT]-A-[ENT]-[PT]-[PTS]-[AG]. The interval 221–338 (AAETPAPAAN…HHYPEMDARQ (118 aa)) is disordered. Low complexity predominate over residues 236-270 (ANPTGPAANPPATTANPPAPAANPSAPAATPTGPA). The residue at position 303 (Ser303) is a Phosphoserine. Basic and acidic residues predominate over residues 327–338 (GGHHYPEMDARQ). Residues Ser350 and Ser353 each carry the phosphoserine modification. The interval 354–391 (LDEEWRAPQAGSRTPVPSTVQANTFEFADAEEDDEVKV) is disordered. The span at 364-377 (GSRTPVPSTVQANT) shows a compositional bias: polar residues. A compositionally biased stretch (acidic residues) spans 381-391 (ADAEEDDEVKV).

The protein belongs to the BORG/CEP family. As to quaternary structure, interacts with RHOQ and CDC42, in a GTP-dependent manner. Endothelial and bone marrow stromal cells.

The protein localises to the endomembrane system. It localises to the cytoplasm. Its subcellular location is the cytoskeleton. Functionally, probably involved in the organization of the actin cytoskeleton. Induced membrane extensions in fibroblasts. In Homo sapiens (Human), this protein is Cdc42 effector protein 1 (CDC42EP1).